The following is a 120-amino-acid chain: MSYRKLGRTSSQRKALLRDLVTDLIINERIETTEARAKELRSVVEKMITLGKRGDLHARRQAAAFVRKEVANTETGQDAIQKLFSDIAPRYQDRQGGYTRIMKLGPRRGDGAPMVIIELV.

Belongs to the bacterial ribosomal protein bL17 family. As to quaternary structure, part of the 50S ribosomal subunit. Contacts protein L32.

In Anoxybacillus flavithermus (strain DSM 21510 / WK1), this protein is Large ribosomal subunit protein bL17.